We begin with the raw amino-acid sequence, 824 residues long: Ras guanine nucleotide exchange factor I (824 aa).

Disordered stretches follow at residues Met1 to Lys51 and Gly65 to Asp167. Residues Ser8–Ser41 show a composition bias toward low complexity. Positions Asn83–Ser95 are enriched in polar residues. Residues Ser104–Ile116 are compositionally biased toward low complexity. Residues Gly117–Ser128 show a composition bias toward gly residues. The segment covering Ser136–Asp167 has biased composition (low complexity). The LisH domain maps to Gly223–Tyr255. 2 disordered regions span residues Tyr330–Thr354 and Asn398–Thr425. A compositionally biased stretch (basic and acidic residues) spans Val331–Lys341. Residues Ser343–Thr354 are compositionally biased toward low complexity. Positions Leu413–Thr425 are enriched in polar residues. An N-terminal Ras-GEF domain is found at Leu426–Leu551. The Ras-GEF domain occupies Asp585–Arg816.

Promotes the exchange of Ras-bound GDP by GTP. The chain is Ras guanine nucleotide exchange factor I (gefI) from Dictyostelium discoideum (Social amoeba).